We begin with the raw amino-acid sequence, 375 residues long: Beta sliding clamp (375 aa).

The protein belongs to the beta sliding clamp family. In terms of assembly, forms a ring-shaped head-to-tail homodimer around DNA which binds and tethers DNA polymerases and other proteins to the DNA. The DNA replisome complex has a single clamp-loading complex (3 tau and 1 each of delta, delta', psi and chi subunits) which binds 3 Pol III cores (1 core on the leading strand and 2 on the lagging strand) each with a beta sliding clamp dimer. Additional proteins in the replisome are other copies of gamma, psi and chi, Ssb, DNA helicase and RNA primase.

Its subcellular location is the cytoplasm. Functionally, confers DNA tethering and processivity to DNA polymerases and other proteins. Acts as a clamp, forming a ring around DNA (a reaction catalyzed by the clamp-loading complex) which diffuses in an ATP-independent manner freely and bidirectionally along dsDNA. Initially characterized for its ability to contact the catalytic subunit of DNA polymerase III (Pol III), a complex, multichain enzyme responsible for most of the replicative synthesis in bacteria; Pol III exhibits 3'-5' exonuclease proofreading activity. The beta chain is required for initiation of replication as well as for processivity of DNA replication. This Synechococcus elongatus (strain ATCC 33912 / PCC 7942 / FACHB-805) (Anacystis nidulans R2) protein is Beta sliding clamp (dnaN).